We begin with the raw amino-acid sequence, 338 residues long: Ketol-acid reductoisomerase (NADP(+)) (338 aa).

The KARI N-terminal Rossmann domain occupies 1–181 (MKVFYDKDCD…GGGKAGIIET (181 aa)). NADP(+) contacts are provided by residues 24–27 (YGSQ), R47, and S52. Residue H107 is part of the active site. Position 133 (G133) interacts with NADP(+). Residues 182–327 (NFKEETETDL…AQLRAMMPWI (146 aa)) form the KARI C-terminal knotted domain. Mg(2+)-binding residues include D190, E194, E226, and E230. Position 251 (S251) interacts with substrate.

Belongs to the ketol-acid reductoisomerase family. Mg(2+) serves as cofactor.

It catalyses the reaction (2R)-2,3-dihydroxy-3-methylbutanoate + NADP(+) = (2S)-2-acetolactate + NADPH + H(+). It carries out the reaction (2R,3R)-2,3-dihydroxy-3-methylpentanoate + NADP(+) = (S)-2-ethyl-2-hydroxy-3-oxobutanoate + NADPH + H(+). The protein operates within amino-acid biosynthesis; L-isoleucine biosynthesis; L-isoleucine from 2-oxobutanoate: step 2/4. It participates in amino-acid biosynthesis; L-valine biosynthesis; L-valine from pyruvate: step 2/4. Involved in the biosynthesis of branched-chain amino acids (BCAA). Catalyzes an alkyl-migration followed by a ketol-acid reduction of (S)-2-acetolactate (S2AL) to yield (R)-2,3-dihydroxy-isovalerate. In the isomerase reaction, S2AL is rearranged via a Mg-dependent methyl migration to produce 3-hydroxy-3-methyl-2-ketobutyrate (HMKB). In the reductase reaction, this 2-ketoacid undergoes a metal-dependent reduction by NADPH to yield (R)-2,3-dihydroxy-isovalerate. This is Ketol-acid reductoisomerase (NADP(+)) from Paracidovorax citrulli (strain AAC00-1) (Acidovorax citrulli).